We begin with the raw amino-acid sequence, 485 residues long: Homeobox protein unplugged (485 aa).

Disordered regions lie at residues 1–65, 114–157, and 212–325; these read MERP…QEQE, PAGH…DTRF, and GMAQ…RRTA. The segment covering 54–64 has biased composition (acidic residues); sequence RDQEQEAEQEQ. A compositionally biased stretch (low complexity) spans 114 to 128; that stretch reads PAGHPAAQQPQAQAQ. 2 stretches are compositionally biased toward polar residues: residues 223 to 234 and 254 to 267; these read QAHSSPAKSGSH and DSCS…SPRN. The span at 284–293 shows a compositional bias: acidic residues; sequence DSEDCSDDEG. Residues 308–317 show a composition bias toward low complexity; it reads SQGNGSSSNS. The segment at residues 319-378 is a DNA-binding region (homeobox); the sequence is SRRRRTAFTSEQLLELEREFHAKKYLSLTERSQIATSLKLSEVQVKIWFQNRRAKWKRVK.

In terms of tissue distribution, expressed in the neuroectodermal and mesectodermal cells at the ventral midline of stage 8 embryos, Subsequently, expression domains in the CNS widen and have their most anterior border in the posterior deutocerebrum. Oc/otd and unpg are mutual repressors at the interface of their brain-specific expression domains. Expression fades during germ band retraction and is then restricted to subset of cells by stage 14. Expressed in the founder cells of the cerebral branch within the first tracheal metamere. Outside the CNS, expression is seen in two clusters of ectodermal cells located laterally within the labial and first thoracic segments of stage 9 embryos. By stage 13, the expression is detected in a few cells close to the dorsal midline of the embryos.

The protein localises to the nucleus. Plays a regulatory role in neural branching of the tracheae: segment-specific aspects of these neural branching patterns appear to be generated by homeotic regulation of expression. May have a role with oc/otd in the postembryonic development of the brain. The chain is Homeobox protein unplugged from Drosophila melanogaster (Fruit fly).